The sequence spans 349 residues: Magnesium-protoporphyrin IX monomethyl ester [oxidative] cyclase (349 aa).

Belongs to the AcsF family. Requires Fe cation as cofactor.

It is found in the plastid. The protein localises to the chloroplast. It carries out the reaction Mg-protoporphyrin IX 13-monomethyl ester + 3 NADPH + 3 O2 + 2 H(+) = 3,8-divinyl protochlorophyllide a + 3 NADP(+) + 5 H2O. It functions in the pathway porphyrin-containing compound metabolism; chlorophyll biosynthesis (light-independent). Its function is as follows. Catalyzes the formation of the isocyclic ring in chlorophyll biosynthesis. Mediates the cyclase reaction, which results in the formation of divinylprotochlorophyllide (Pchlide) characteristic of all chlorophylls from magnesium-protoporphyrin IX 13-monomethyl ester (MgPMME). This is Magnesium-protoporphyrin IX monomethyl ester [oxidative] cyclase from Porphyra purpurea (Red seaweed).